Consider the following 246-residue polypeptide: Probable transcriptional regulatory protein YebC (246 aa).

Residues 1–20 (MAGHSKWANTRHRKAAQDAK) form a disordered region.

This sequence belongs to the TACO1 family.

The protein localises to the cytoplasm. This is Probable transcriptional regulatory protein YebC from Salmonella typhimurium (strain LT2 / SGSC1412 / ATCC 700720).